The primary structure comprises 117 residues: Large ribosomal subunit protein uL18 (117 aa).

It belongs to the universal ribosomal protein uL18 family. In terms of assembly, part of the 50S ribosomal subunit; part of the 5S rRNA/L5/L18/L25 subcomplex. Contacts the 5S and 23S rRNAs.

Its function is as follows. This is one of the proteins that bind and probably mediate the attachment of the 5S RNA into the large ribosomal subunit, where it forms part of the central protuberance. This chain is Large ribosomal subunit protein uL18, found in Pasteurella multocida (strain Pm70).